The chain runs to 239 residues: Aspartate/glutamate leucyltransferase (239 aa).

It belongs to the R-transferase family. Bpt subfamily.

It localises to the cytoplasm. The enzyme catalyses N-terminal L-glutamyl-[protein] + L-leucyl-tRNA(Leu) = N-terminal L-leucyl-L-glutamyl-[protein] + tRNA(Leu) + H(+). It catalyses the reaction N-terminal L-aspartyl-[protein] + L-leucyl-tRNA(Leu) = N-terminal L-leucyl-L-aspartyl-[protein] + tRNA(Leu) + H(+). In terms of biological role, functions in the N-end rule pathway of protein degradation where it conjugates Leu from its aminoacyl-tRNA to the N-termini of proteins containing an N-terminal aspartate or glutamate. This chain is Aspartate/glutamate leucyltransferase, found in Campylobacter jejuni subsp. jejuni serotype O:2 (strain ATCC 700819 / NCTC 11168).